Here is a 178-residue protein sequence, read N- to C-terminus: MSRIGNSPVAVPSNVTVTINGQNVEVKGPKGTLAIDVPEPITIAQEGDEIVVSRPDDHRKSRSLHGLSRSLINNMVVGVTEGYTIKMEIFGVGYRVLAKGSDLEFSLGYSHPILIKAPEGITFAVDGQTKFSISGIDKQQVGQLAANIRRLRKDDPYKGKGIRYEGEQIRRKVGKTGK.

It belongs to the universal ribosomal protein uL6 family. Part of the 50S ribosomal subunit.

Its function is as follows. This protein binds to the 23S rRNA, and is important in its secondary structure. It is located near the subunit interface in the base of the L7/L12 stalk, and near the tRNA binding site of the peptidyltransferase center. This is Large ribosomal subunit protein uL6 from Corynebacterium kroppenstedtii (strain DSM 44385 / JCM 11950 / CIP 105744 / CCUG 35717).